A 380-amino-acid polypeptide reads, in one-letter code: DNA replication and repair protein RecF (380 aa).

30–37 (GNNAQGKS) serves as a coordination point for ATP.

This sequence belongs to the RecF family.

The protein resides in the cytoplasm. Its function is as follows. The RecF protein is involved in DNA metabolism; it is required for DNA replication and normal SOS inducibility. RecF binds preferentially to single-stranded, linear DNA. It also seems to bind ATP. This Rippkaea orientalis (strain PCC 8801 / RF-1) (Cyanothece sp. (strain PCC 8801)) protein is DNA replication and repair protein RecF.